Here is a 75-residue protein sequence, read N- to C-terminus: Metallothionein-like protein 1 (75 aa).

This sequence belongs to the metallothionein superfamily. Type 15 family.

Its function is as follows. Metallothioneins have a high content of cysteine residues that bind various heavy metals. The chain is Metallothionein-like protein 1 (MT1B) from Trifolium repens (Creeping white clover).